The following is a 141-amino-acid chain: Aspartate 1-decarboxylase (141 aa).

Ser-25 functions as the Schiff-base intermediate with substrate; via pyruvic acid in the catalytic mechanism. Pyruvic acid (Ser) is present on Ser-25. Substrate is bound at residue Thr-57. Tyr-58 (proton donor) is an active-site residue. Gly-73–Ala-75 is a binding site for substrate. Residues Ala-121–Gly-141 form a disordered region.

This sequence belongs to the PanD family. As to quaternary structure, heterooctamer of four alpha and four beta subunits. Pyruvate is required as a cofactor. Is synthesized initially as an inactive proenzyme, which is activated by self-cleavage at a specific serine bond to produce a beta-subunit with a hydroxyl group at its C-terminus and an alpha-subunit with a pyruvoyl group at its N-terminus.

It is found in the cytoplasm. The catalysed reaction is L-aspartate + H(+) = beta-alanine + CO2. It participates in cofactor biosynthesis; (R)-pantothenate biosynthesis; beta-alanine from L-aspartate: step 1/1. Its function is as follows. Catalyzes the pyruvoyl-dependent decarboxylation of aspartate to produce beta-alanine. This chain is Aspartate 1-decarboxylase, found in Streptomyces griseus subsp. griseus (strain JCM 4626 / CBS 651.72 / NBRC 13350 / KCC S-0626 / ISP 5235).